A 380-amino-acid polypeptide reads, in one-letter code: Chaperone protein DnaJ (380 aa).

The J domain maps to 5-70; the sequence is DFYEVLGVSK…NLRARYDQYG (66 aa). The CR-type zinc-finger motif lies at 135–213; the sequence is GVSKEIKVPS…CHGEGRYQKT (79 aa). Zn(2+)-binding residues include cysteine 148, cysteine 151, cysteine 165, cysteine 168, cysteine 187, cysteine 190, cysteine 201, and cysteine 204. CXXCXGXG motif repeat units follow at residues 148 to 155, 165 to 172, 187 to 194, and 201 to 208; these read CEVCNGSG, CPTCHGAG, CPHCHGRG, and CRKCHGEG.

This sequence belongs to the DnaJ family. In terms of assembly, homodimer. It depends on Zn(2+) as a cofactor.

Its subcellular location is the cytoplasm. Functionally, participates actively in the response to hyperosmotic and heat shock by preventing the aggregation of stress-denatured proteins and by disaggregating proteins, also in an autonomous, DnaK-independent fashion. Unfolded proteins bind initially to DnaJ; upon interaction with the DnaJ-bound protein, DnaK hydrolyzes its bound ATP, resulting in the formation of a stable complex. GrpE releases ADP from DnaK; ATP binding to DnaK triggers the release of the substrate protein, thus completing the reaction cycle. Several rounds of ATP-dependent interactions between DnaJ, DnaK and GrpE are required for fully efficient folding. Also involved, together with DnaK and GrpE, in the DNA replication of plasmids through activation of initiation proteins. This Aeromonas salmonicida (strain A449) protein is Chaperone protein DnaJ.